The following is a 159-amino-acid chain: E3 ubiquitin ligase complex SCF subunit sconC (159 aa).

Positions 101-159 (ILAANYLDIKALLDVGCKTVANMIKGKSPEEIRKTFNIQNDFTPEEEDQIRRENEWAEE) are interaction with the F-box domain of F-box proteins.

Belongs to the SKP1 family. As to quaternary structure, component of the SCF (SKP1-CUL1-F-box protein) E3 ubiquitin ligase complexes.

Its pathway is protein modification; protein ubiquitination. Functionally, essential component of the SCF (SKP1-CUL1-F-box protein) E3 ubiquitin ligase complexes, which mediate the ubiquitination and subsequent proteasomal degradation of target proteins. Controls sulfur metabolite repression, probably by mediating the inactivation or degradation of the metR transcription factor. In Aspergillus clavatus (strain ATCC 1007 / CBS 513.65 / DSM 816 / NCTC 3887 / NRRL 1 / QM 1276 / 107), this protein is E3 ubiquitin ligase complex SCF subunit sconC (sconC).